A 434-amino-acid polypeptide reads, in one-letter code: Homoserine dehydrogenase (434 aa).

NADPH-binding residues include T13 and V14. 3 residues coordinate NAD(+): V14, A33, and A43. V14 provides a ligand contact to NADP(+). Residue R45 coordinates NADPH. The NADP(+) site is built by R45, R46, and K103. K103 is an NADPH binding site. Residues E127, V130, G132, and I134 each contribute to the Na(+) site. Positions 185 and 188 each coordinate NADP(+). Residues E188 and D199 each coordinate L-homoserine. The active-site Proton donor is K203. An NADPH-binding site is contributed by G300. G300 lines the NAD(+) pocket. Residue G300 coordinates NADP(+). Positions 353-429 constitute an ACT domain; the sequence is YLRIQAKDHP…GVSGPVVRIR (77 aa).

This sequence belongs to the homoserine dehydrogenase family. A metal cation serves as cofactor.

The enzyme catalyses L-homoserine + NADP(+) = L-aspartate 4-semialdehyde + NADPH + H(+). It catalyses the reaction L-homoserine + NAD(+) = L-aspartate 4-semialdehyde + NADH + H(+). It participates in amino-acid biosynthesis; L-methionine biosynthesis via de novo pathway; L-homoserine from L-aspartate: step 3/3. The protein operates within amino-acid biosynthesis; L-threonine biosynthesis; L-threonine from L-aspartate: step 3/5. Feedback inhibition by threonine. Catalyzes the conversion of L-aspartate-beta-semialdehyde (L-Asa) to L-homoserine (L-Hse), the third step in the biosynthesis of threonine and methionine from aspartate. The chain is Homoserine dehydrogenase (hom) from Pseudomonas aeruginosa (strain ATCC 15692 / DSM 22644 / CIP 104116 / JCM 14847 / LMG 12228 / 1C / PRS 101 / PAO1).